Here is a 243-residue protein sequence, read N- to C-terminus: Venom nerve growth factor 1 (243 aa).

The N-terminal stretch at 1-18 is a signal peptide; sequence MSMLCYTLIIAFLIGIWA. Positions 19-125 are excised as a propeptide; sequence VPKSEDNAPL…ALNRNIRAKR (107 aa). Cystine bridges form between cysteine 139/cysteine 204, cysteine 182/cysteine 232, and cysteine 192/cysteine 234. N-linked (GlcNAc...) asparagine glycosylation occurs at asparagine 148.

This sequence belongs to the NGF-beta family. As to quaternary structure, homodimer; non-covalently linked. As to expression, expressed by the venom gland.

The protein resides in the secreted. Functionally, nerve growth factor is important for the development and maintenance of the sympathetic and sensory nervous systems. It stimulates division and differentiation of sympathetic and embryonic sensory neurons as well as basal forebrain cholinergic neurons in the brain. Its relevance in the snake venom is not clear. However, it has been shown to inhibit metalloproteinase-dependent proteolysis of platelet glycoprotein Ib alpha, suggesting a metalloproteinase inhibition to prevent metalloprotease autodigestion and/or protection against prey proteases. Binds a lipid between the two protein chains in the homodimer. The lipid-bound form promotes histamine relase from mouse mast cells, contrary to the lipid-free form. The chain is Venom nerve growth factor 1 from Naja sputatrix (Malayan spitting cobra).